The following is a 340-amino-acid chain: NADPH dehydrogenase (340 aa).

23–26 lines the FMN pocket; sequence SPMC. Tyrosine 28 is a binding site for substrate. Residues alanine 60 and glutamine 102 each coordinate FMN. 164–167 lines the substrate pocket; sequence HAAH. FMN-binding positions include arginine 215 and 307-308; that span reads GR.

This sequence belongs to the NADH:flavin oxidoreductase/NADH oxidase family. NamA subfamily. Homotetramer. The cofactor is FMN.

The catalysed reaction is A + NADPH + H(+) = AH2 + NADP(+). Functionally, catalyzes the reduction of the double bond of an array of alpha,beta-unsaturated aldehydes and ketones. It also reduces the nitro group of nitroester and nitroaromatic compounds. It could have a role in detoxification processes. This chain is NADPH dehydrogenase, found in Geobacillus thermodenitrificans (strain NG80-2).